The primary structure comprises 187 residues: UPF0340 protein stu1894 (187 aa).

This sequence belongs to the UPF0340 family.

In Streptococcus thermophilus (strain ATCC BAA-250 / LMG 18311), this protein is UPF0340 protein stu1894.